The primary structure comprises 417 residues: Hyaluronidase-3 (417 aa).

The N-terminal stretch at 1-20 is a signal peptide; the sequence is MTTQLGPALVLGVALCLGCG. Intrachain disulfides connect cysteine 42–cysteine 331, cysteine 205–cysteine 220, cysteine 356–cysteine 367, cysteine 361–cysteine 395, and cysteine 397–cysteine 406. N-linked (GlcNAc...) asparagine glycosylation is present at asparagine 69. Glutamate 129 acts as the Proton donor in catalysis. The N-linked (GlcNAc...) asparagine glycan is linked to asparagine 215. Residues 352 to 407 enclose the EGF-like domain; it reads AAMACSHQRCHGHGRCARRDPGQMEAFLHLWPDGSLGDWKSFSCHCYWGWAGPTCQ.

It belongs to the glycosyl hydrolase 56 family. N-glycosylated. Expressed in sperm. Highly expressed in epidermis of the skin, where it is expressed intracellularily in the deep horny layer (at protein level). Bone marrow, testis and kidney.

The protein localises to the secreted. The protein resides in the cell membrane. It localises to the cytoplasmic vesicle. It is found in the secretory vesicle. Its subcellular location is the acrosome. The protein localises to the endoplasmic reticulum. The protein resides in the early endosome. The enzyme catalyses Random hydrolysis of (1-&gt;4)-linkages between N-acetyl-beta-D-glucosamine and D-glucuronate residues in hyaluronate.. Facilitates sperm penetration into the layer of cumulus cells surrounding the egg by digesting hyaluronic acid. Involved in induction of the acrosome reaction in the sperm. Involved in follicular atresia, the breakdown of immature ovarian follicles that are not selected to ovulate. Induces ovarian granulosa cell apoptosis, possibly via apoptotic signaling pathway involving CASP8 and CASP3 activation, and poly(ADP-ribose) polymerase (PARP) cleavage. Has no hyaluronidase activity in embryonic fibroblasts in vitro. Has no hyaluronidase activity in granulosa cells in vitro. The polypeptide is Hyaluronidase-3 (HYAL3) (Homo sapiens (Human)).